The chain runs to 414 residues: 3-oxoacyl-[acyl-carrier-protein] synthase 2 (414 aa).

The region spanning 3–413 (KRRVVVTGMG…GTNGSLIFKR (411 aa)) is the Ketosynthase family 3 (KS3) domain. Residues Cys164, His304, and His342 each act as for beta-ketoacyl synthase activity in the active site.

Belongs to the thiolase-like superfamily. Beta-ketoacyl-ACP synthases family. In terms of assembly, homodimer.

It catalyses the reaction a fatty acyl-[ACP] + malonyl-[ACP] + H(+) = a 3-oxoacyl-[ACP] + holo-[ACP] + CO2. It carries out the reaction (9Z)-hexadecenoyl-[ACP] + malonyl-[ACP] + H(+) = 3-oxo-(11Z)-octadecenoyl-[ACP] + holo-[ACP] + CO2. The protein operates within lipid metabolism; fatty acid biosynthesis. Functionally, involved in the type II fatty acid elongation cycle. Catalyzes the elongation of a wide range of acyl-ACP by the addition of two carbons from malonyl-ACP to an acyl acceptor. Can efficiently catalyze the conversion of palmitoleoyl-ACP (cis-hexadec-9-enoyl-ACP) to cis-vaccenoyl-ACP (cis-octadec-11-enoyl-ACP), an essential step in the thermal regulation of fatty acid composition. In Vibrio cholerae serotype O1 (strain ATCC 39315 / El Tor Inaba N16961), this protein is 3-oxoacyl-[acyl-carrier-protein] synthase 2 (fabF).